Consider the following 194-residue polypeptide: WASH complex subunit 3 (194 aa).

Position 1 is an N-acetylmethionine (Met-1). Residues 46-74 adopt a coiled-coil conformation; it reads AVCEEKLADLSLRIQQIETTLNILDAKLS. Disordered regions lie at residues 94–126 and 158–194; these read VTNG…PSEN and SEGL…SFSD. Low complexity predominate over residues 98 to 113; the sequence is SHSETTSEQTQQNSTQ. The span at 114-126 shows a compositional bias: polar residues; that stretch reads DSGAQESEAPSEN.

Belongs to the CCDC53 family. As to quaternary structure, component of the WASH core complex also described as WASH regulatory complex (SHRC) composed of WASHC1, WASHC2, WASHC3, WASHC4 and WASHC5. The WASH core complex associates via WASHC2 with the F-actin-capping protein dimer (formed by CAPZA1, CAPZA2 or CAPZA3 and CAPZB) in a transient or substoichiometric manner which was initially described as WASH complex.

The protein localises to the early endosome. In terms of biological role, acts as a component of the WASH core complex that functions as a nucleation-promoting factor (NPF) at the surface of endosomes, where it recruits and activates the Arp2/3 complex to induce actin polymerization, playing a key role in the fission of tubules that serve as transport intermediates during endosome sortingg. In Mus musculus (Mouse), this protein is WASH complex subunit 3.